Consider the following 312-residue polypeptide: Glyoxylate/hydroxypyruvate reductase A (312 aa).

The active site involves R227. H275 serves as the catalytic Proton donor.

It belongs to the D-isomer specific 2-hydroxyacid dehydrogenase family. GhrA subfamily.

The protein localises to the cytoplasm. The enzyme catalyses glycolate + NADP(+) = glyoxylate + NADPH + H(+). It catalyses the reaction (R)-glycerate + NAD(+) = 3-hydroxypyruvate + NADH + H(+). The catalysed reaction is (R)-glycerate + NADP(+) = 3-hydroxypyruvate + NADPH + H(+). In terms of biological role, catalyzes the NADPH-dependent reduction of glyoxylate and hydroxypyruvate into glycolate and glycerate, respectively. This chain is Glyoxylate/hydroxypyruvate reductase A, found in Escherichia coli O17:K52:H18 (strain UMN026 / ExPEC).